Consider the following 403-residue polypeptide: cAMP-dependent protein kinase regulatory subunit (403 aa).

Positions 1-155 are dimerization and phosphorylation; that stretch reads MADYTIPSEL…RIQASIGNNF (155 aa). Residues 79–125 are disordered; it reads YAYSTDDGFGTEDDDDDDDDEDDEAAIPPPVVNRGRRTSVSAESMAP. Acidic residues predominate over residues 87-103; the sequence is FGTEDDDDDDDDEDDEA. A Phosphoserine modification is found at S117. 3',5'-cyclic AMP is bound by residues 156–278, E226, R235, 279–403, E349, and R358; these read LFRN…EEVP and LLSS…PGEH.

Belongs to the cAMP-dependent kinase regulatory chain family. In terms of assembly, tetramer, composed of 2 regulatory (R) and 2 catalytic (C) subunits. In the presence of cAMP it dissociates into 2 active monomeric C subunits and an R dimer that binds four cAMP molecules.

The protein is cAMP-dependent protein kinase regulatory subunit (PKAR) of Blastocladiella emersonii (Aquatic fungus).